Consider the following 155-residue polypeptide: Small ribosomal subunit protein uS10m (155 aa).

Belongs to the universal ribosomal protein uS10 family. Component of the mitochondrial ribosome small subunit (28S) which comprises a 12S rRNA and about 30 distinct proteins.

The protein resides in the mitochondrion. The sequence is that of Small ribosomal subunit protein uS10m (Mrps10) from Rattus norvegicus (Rat).